The chain runs to 72 residues: Enterobactin biosynthesis protein YbdZ (72 aa).

It belongs to the MbtH-like family.

Functionally, involved in the biosynthesis of the siderophore enterobactin (enterochelin), which is a macrocyclic trimeric lactone of N-(2,3-dihydroxybenzoyl)-serine. Plays a role in the catalytic function of EntF. It is required for adenylation of amino acids in non-ribosomal peptide biosynthesis. The protein is Enterobactin biosynthesis protein YbdZ of Escherichia coli (strain K12).